A 512-amino-acid chain; its full sequence is Kynurenine 3-monooxygenase (512 aa).

It belongs to the aromatic-ring hydroxylase family. KMO subfamily. The cofactor is FAD.

The protein localises to the mitochondrion outer membrane. The enzyme catalyses L-kynurenine + NADPH + O2 + H(+) = 3-hydroxy-L-kynurenine + NADP(+) + H2O. Its pathway is cofactor biosynthesis; NAD(+) biosynthesis; quinolinate from L-kynurenine: step 1/3. Functionally, catalyzes the hydroxylation of L-kynurenine (L-Kyn) to form 3-hydroxy-L-kynurenine (L-3OHKyn). Required for synthesis of quinolinic acid. This is Kynurenine 3-monooxygenase (nic-3) from Neurospora crassa (strain ATCC 24698 / 74-OR23-1A / CBS 708.71 / DSM 1257 / FGSC 987).